Reading from the N-terminus, the 38-residue chain is Large ribosomal subunit protein bL36 (38 aa).

The protein belongs to the bacterial ribosomal protein bL36 family.

The polypeptide is Large ribosomal subunit protein bL36 (Karelsulcia muelleri (strain GWSS) (Sulcia muelleri)).